Consider the following 763-residue polypeptide: Phosphoglycerol transferase I (763 aa).

4 helical membrane passes run 1–21, 26–46, 77–97, and 108–128; these read MSEL…AWKA, WWFA…ITLF, ILPG…LGWI, and FGYS…SPAF.

Belongs to the OpgB family.

It is found in the cell inner membrane. The enzyme catalyses a phosphatidylglycerol + a membrane-derived-oligosaccharide D-glucose = a 1,2-diacyl-sn-glycerol + a membrane-derived-oligosaccharide 6-(glycerophospho)-D-glucose.. It functions in the pathway glycan metabolism; osmoregulated periplasmic glucan (OPG) biosynthesis. Transfers a phosphoglycerol residue from phosphatidylglycerol to the membrane-bound nascent glucan backbones. The protein is Phosphoglycerol transferase I of Escherichia coli (strain 55989 / EAEC).